Consider the following 629-residue polypeptide: tRNA uridine 5-carboxymethylaminomethyl modification enzyme MnmG (629 aa).

Residues Gly-13–Gly-18, Val-125, and Ser-180 contribute to the FAD site. Position 273-287 (Gly-273–Phe-287) interacts with NAD(+). Gln-370 contacts FAD.

This sequence belongs to the MnmG family. Homodimer. Heterotetramer of two MnmE and two MnmG subunits. FAD is required as a cofactor.

It localises to the cytoplasm. Functionally, NAD-binding protein involved in the addition of a carboxymethylaminomethyl (cmnm) group at the wobble position (U34) of certain tRNAs, forming tRNA-cmnm(5)s(2)U34. This chain is tRNA uridine 5-carboxymethylaminomethyl modification enzyme MnmG, found in Citrobacter koseri (strain ATCC BAA-895 / CDC 4225-83 / SGSC4696).